A 431-amino-acid chain; its full sequence is MADQSSRYISNLTRDTYALILAGGKGSRLHELTTWRAKPALYFGGKFRIIDFPLSNCVNSGIRRIGVVTQYKSHSLIRHLVRGWGHFKKELGESVEILPASQRFSDSWYEGTADAVFQNIDIIRDELPKYVMILSGDHIYRMDYGDMLAKHKESGAKMTVSCMSVPLEEAAGAFGVMSVDENYRINGFEEKPANPTPLPNDPTRCLASMGNYVFDTEFLFEQLRVDSENMGSQRDFGKDIIPSIIADHPVYAYPFEQSGGDNAYWRDVGTIDSFWEANMEMVAPVPQLNLYDRKWPIWTYQEQLPPAKFVWEDHDRRGEAINSVVSGGCIISGSTLRSSICFSNVRVHSYGLIEDAVILPDVEIKRHCKLKRVIIDRGCVIPEGTTIGYDLEQDKARGFRVSEKGVVLVTREMLGQPVGGLSQAPNISITL.

Alpha-D-glucose 1-phosphate contacts are provided by residues Tyr-109, Gly-175, 190 to 191 (EK), and Ser-208.

It belongs to the bacterial/plant glucose-1-phosphate adenylyltransferase family. In terms of assembly, homotetramer.

The enzyme catalyses alpha-D-glucose 1-phosphate + ATP + H(+) = ADP-alpha-D-glucose + diphosphate. Its pathway is glycan biosynthesis; glycogen biosynthesis. Involved in the biosynthesis of ADP-glucose, a building block required for the elongation reactions to produce glycogen. Catalyzes the reaction between ATP and alpha-D-glucose 1-phosphate (G1P) to produce pyrophosphate and ADP-Glc. The chain is Glucose-1-phosphate adenylyltransferase from Alteromonas mediterranea (strain DSM 17117 / CIP 110805 / LMG 28347 / Deep ecotype).